Consider the following 173-residue polypeptide: Translation initiation factor IF-3 (173 aa).

Belongs to the IF-3 family. Monomer.

It localises to the cytoplasm. IF-3 binds to the 30S ribosomal subunit and shifts the equilibrium between 70S ribosomes and their 50S and 30S subunits in favor of the free subunits, thus enhancing the availability of 30S subunits on which protein synthesis initiation begins. This is Translation initiation factor IF-3 from Ehrlichia ruminantium (strain Gardel).